The sequence spans 1217 residues: Myosin-1 (1217 aa).

The interval 1 to 26 (MAILKRTNRAKAATAAAPNSTGKSNG) is disordered. Residues 10–19 (AKAATAAAPN) are compositionally biased toward low complexity. Residues 17-24 (APNSTGKS) and 133-140 (GESGAGKT) each bind ATP. The Myosin motor domain maps to 40–720 (VGVDDLTLLS…TLFALEDMRD (681 aa)). Residue serine 361 is modified to Phosphoserine. Tyrosine 363 carries the post-translational modification Phosphotyrosine. The interval 409-491 (SIGILDIYGF…PGLFAAMNDA (83 aa)) is actin-binding. 2 IQ domains span residues 724–744 (DTMATRIQRAWRSYVRRRSEA) and 745–770 (AACIQKLWNRNKVNMELERVRNEGTK). Serine 742 carries the phosphoserine modification. Residues 778 to 964 (RRRYSILGSR…TIHVGTGLPP (187 aa)) enclose the TH1 domain. Serine 782 bears the Phosphoserine mark. The interval 961–1105 (GLPPTSKSKP…PPPPPPPAEV (145 aa)) is disordered. The segment covering 998–1013 (KPVSMPAAKSKPAPMA) has biased composition (low complexity). Residues 1015-1025 (PVSTAQQTQNR) show a composition bias toward polar residues. A compositionally biased stretch (low complexity) spans 1045–1075 (TSTTTTIKQATTVSASKPAPSTVTSAASSPS). Residues 1076–1088 (NISKPSAPVANNV) are compositionally biased toward polar residues. Residues 1093-1103 (AVPPPPPPPPA) show a composition bias toward pro residues. The SH3 domain maps to 1106-1165 (EKKDLYLALYDFAGRSPNEMTIKKDEIIEIVQKEPSGWWLALKNGAEGWVPATYVTEYKG). A Phosphoserine modification is found at serine 1211.

This sequence belongs to the TRAFAC class myosin-kinesin ATPase superfamily. Myosin family. Interacts with cam2. Interacts (via SH3 domain) with vrp1. Post-translationally, phosphorylation of the TEDS site (Ser-361) is required for the polarization of the actin cytoskeleton. Phosphorylation probably activates the myosin-I ATPase activity.

Its subcellular location is the cytoplasm. The protein localises to the cytoskeleton. The protein resides in the actin patch. In terms of biological role, type-I myosin implicated in the organization of the actin cytoskeleton. Required for proper actin cytoskeleton polarization. At the cell cortex, assembles in patch-like structures together with proteins from the actin-polymerizing machinery and promotes actin assembly. Functions as actin nucleation-promoting factor (NPF) for the Arp2/3 complex. Contributes to proper septation by transporting vesicles containing septal material to the division site and is involved in the formation of sterol-rich membrane domains at the cell division site. Required also for mating. The polypeptide is Myosin-1 (myo1) (Schizosaccharomyces pombe (strain 972 / ATCC 24843) (Fission yeast)).